A 385-amino-acid chain; its full sequence is tRNA-specific 2-thiouridylase MnmA (385 aa).

Residues 29 to 36 (GLSGGVDS) and Leu55 contribute to the ATP site. Cys116 serves as the catalytic Nucleophile. Cys116 and Cys225 are oxidised to a cystine. Position 141 (Gly141) interacts with ATP. Positions 175-177 (KDQ) are interaction with tRNA. Cys225 functions as the Cysteine persulfide intermediate in the catalytic mechanism. Positions 330–331 (RY) are interaction with tRNA.

This sequence belongs to the MnmA/TRMU family.

It is found in the cytoplasm. The catalysed reaction is S-sulfanyl-L-cysteinyl-[protein] + uridine(34) in tRNA + AH2 + ATP = 2-thiouridine(34) in tRNA + L-cysteinyl-[protein] + A + AMP + diphosphate + H(+). Its function is as follows. Catalyzes the 2-thiolation of uridine at the wobble position (U34) of tRNA, leading to the formation of s(2)U34. This is tRNA-specific 2-thiouridylase MnmA from Prochlorococcus marinus (strain MIT 9301).